Consider the following 269-residue polypeptide: Glucosyl-3-phosphoglycerate/mannosyl-3-phosphoglycerate phosphatase (269 aa).

The Nucleophile role is filled by aspartate 6. Residues aspartate 6, aspartate 8, and aspartate 210 each coordinate Mg(2+).

Belongs to the HAD-like hydrolase superfamily. MPGP family. In terms of assembly, monomer. The cofactor is Co(2+). Mg(2+) is required as a cofactor.

It carries out the reaction (2R)-2-O-(alpha-D-glucopyranosyl)-3-phospho-glycerate + H2O = (2R)-2-O-(alpha-D-glucopyranosyl)-glycerate + phosphate. The catalysed reaction is 2-O-(alpha-D-mannosyl)-3-phosphoglycerate + H2O = (2R)-2-O-(alpha-D-mannosyl)-glycerate + phosphate. Its function is as follows. Involved in the biosynthesis of glucosylglycerate. Catalyzes the dephosphorylation of glucosyl-3-phosphoglycerate (GPG) and mannosyl-3-phosphoglycerate (MPG) to glucosylglycerate (GG) and mannosylglycerate (MG), respectively. This Persephonella marina (strain DSM 14350 / EX-H1) protein is Glucosyl-3-phosphoglycerate/mannosyl-3-phosphoglycerate phosphatase.